The chain runs to 256 residues: Extracellular serine-rich protein ARB_03024 (256 aa).

An N-terminal signal peptide occupies residues 1–19 (MVATKSVLSAVALAGVAAA). Residues 135–235 (KIVPQSGSPT…TPTASPGAAA (101 aa)) are disordered. Residues 149-159 (GTLGGSGGSGG) show a composition bias toward gly residues. Low complexity-rich tracts occupy residues 160–204 (SSSS…QSTP) and 215–235 (PSATGSGSHSSTPTASPGAAA). Alanine 233 is lipidated: GPI-anchor amidated alanine. A propeptide spans 234–256 (AAGLKGSAVLAGVVALGAWIGLL) (removed in mature form).

It is found in the cell membrane. The protein resides in the secreted. This chain is Extracellular serine-rich protein ARB_03024, found in Arthroderma benhamiae (strain ATCC MYA-4681 / CBS 112371) (Trichophyton mentagrophytes).